Here is a 245-residue protein sequence, read N- to C-terminus: tRNA pseudouridine synthase A (245 aa).

The active-site Nucleophile is the Asp52. Position 111 (Tyr111) interacts with substrate.

It belongs to the tRNA pseudouridine synthase TruA family. In terms of assembly, homodimer.

The enzyme catalyses uridine(38/39/40) in tRNA = pseudouridine(38/39/40) in tRNA. Functionally, formation of pseudouridine at positions 38, 39 and 40 in the anticodon stem and loop of transfer RNAs. The protein is tRNA pseudouridine synthase A of Rickettsia typhi (strain ATCC VR-144 / Wilmington).